A 58-amino-acid polypeptide reads, in one-letter code: Large ribosomal subunit protein uL30 (58 aa).

Belongs to the universal ribosomal protein uL30 family. In terms of assembly, part of the 50S ribosomal subunit.

This chain is Large ribosomal subunit protein uL30, found in Pseudomonas aeruginosa (strain LESB58).